The chain runs to 201 residues: Eukaryotic translation initiation factor 4E-5 (201 aa).

An intrachain disulfide couples C122 to C126.

This sequence belongs to the eukaryotic initiation factor 4E family. In terms of assembly, eIF4F is a multi-subunit complex, the composition of which varies with external and internal environmental conditions. It is composed of at least eIF4A, eIF4E and eIF4G. eIF4E is also known to interact with other partners. As to expression, enriched in the germline.

Its function is as follows. Recognizes and binds the 7-methylguanosine-containing mRNA cap during an early step in the initiation of protein synthesis and facilitates ribosome binding by inducing the unwinding of the mRNAs secondary structures. All 5 eIF4E proteins bind monomethyl cap structures. Only ife-1, ife-2 and ife-5 bind trimethyl cap structures which result from trans-splicing. Translation of trimethyl cap structure mRNAs may be regulated by intracellular redox state; disulfide bonds change the width and depth of the cap-binding cavity determining selectivity to mRNA caps. The sequence is that of Eukaryotic translation initiation factor 4E-5 (ife-5) from Caenorhabditis elegans.